Consider the following 85-residue polypeptide: UPF0297 protein CD630_12830 (85 aa).

The protein belongs to the UPF0297 family.

This is UPF0297 protein CD630_12830 from Clostridioides difficile (strain 630) (Peptoclostridium difficile).